The chain runs to 489 residues: Cytochrome P450 monooxygenase tazI (489 aa).

Position 433 (Cys433) interacts with heme.

Belongs to the cytochrome P450 family. Heme is required as a cofactor.

The protein operates within secondary metabolite biosynthesis. Its function is as follows. Cytochrome P450 monooxygenase; part of the gene cluster that mediates the biosynthesis of azaterrilone A and other azaphilones, a class of fungal metabolites characterized by a highly oxygenated pyrano-quinone bicyclic core and exhibiting a broad range of bioactivities. The first step of the pathway begins with the non-reducing polyketide synthase tazA that assembles one acetyl-CoA starter unit, five malonyl-CoA units, and catalyzes a series of Claisen condensations, methylation, PT-mediated cyclization, and finally releases the first hexaketide precursor through the R-domain. The tazA product then undergoes reduction on its terminal ketone and the following pyran-ring formation by yet undetermined enzyme(s). Dehydration and enoyl reduction, possibly involving the trans-enoyl reductase tazE leads to the next intermediate. TazD is predicted as an acetyltransferase and might catalyze the acetylation steps leading to the synthesis of azaterrilone A. Azaterrilone A is not the final product of the taz pathway and both the highly reducing polyketide synthase tazB and the dual enzyme tazHJ catalyze late steps of the pathway, leading to the production of the 2 final stereoisomers that contain additional polyketide modification whose structures have still to be determined. This is Cytochrome P450 monooxygenase tazI from Aspergillus terreus (strain NIH 2624 / FGSC A1156).